The chain runs to 153 residues: 6,7-dimethyl-8-ribityllumazine synthase (153 aa).

5-amino-6-(D-ribitylamino)uracil-binding positions include Phe-22, Ala-56 to Glu-58, and Ala-80 to Ile-82. Ser-85–Thr-86 is a (2S)-2-hydroxy-3-oxobutyl phosphate binding site. Catalysis depends on His-88, which acts as the Proton donor. Phe-113 is a binding site for 5-amino-6-(D-ribitylamino)uracil. (2S)-2-hydroxy-3-oxobutyl phosphate is bound at residue Arg-127.

It belongs to the DMRL synthase family.

It carries out the reaction (2S)-2-hydroxy-3-oxobutyl phosphate + 5-amino-6-(D-ribitylamino)uracil = 6,7-dimethyl-8-(1-D-ribityl)lumazine + phosphate + 2 H2O + H(+). The protein operates within cofactor biosynthesis; riboflavin biosynthesis; riboflavin from 2-hydroxy-3-oxobutyl phosphate and 5-amino-6-(D-ribitylamino)uracil: step 1/2. Functionally, catalyzes the formation of 6,7-dimethyl-8-ribityllumazine by condensation of 5-amino-6-(D-ribitylamino)uracil with 3,4-dihydroxy-2-butanone 4-phosphate. This is the penultimate step in the biosynthesis of riboflavin. The chain is 6,7-dimethyl-8-ribityllumazine synthase from Clostridium novyi (strain NT).